Consider the following 280-residue polypeptide: MHLPREAFLLALAGAFIFPSSQQEKRTQRDLRVVCFYQKDFRNGTKAEQWGKKTPTQIWRGCMSVCNAIVVCLFELGVSETWNSKSCKCDCEGGESPTEFPSIRTGSSMVRGVDCMPECPYHRPLGFEAGSISPDQITCSNQDQYTAWFSSWLPSKARLNTQGFGCAWLSKFQDNTQWLQIDLIDAKVVSGILTQGRCDADEWITKYSLQYRTDEKLNWIYYKDQTGNNRVFYGNSDRSSSVQNLLRPPIVARYIRILPLGWHTRIALRLELLLCMNKCS.

The first 23 residues, 1-23, serve as a signal peptide directing secretion; sequence MHLPREAFLLALAGAFIFPSSQQ. One can recognise an F5/8 type C domain in the interval 119 to 275; the sequence is CPYHRPLGFE…IALRLELLLC (157 aa). Disulfide bonds link cysteine 119-cysteine 275 and cysteine 166-cysteine 198.

As to quaternary structure, homooctamer of 4 homodimers; disulfide-linked. The homooctamer has a flat, cogwheel structure with a diameter of about 14 nm. Two stacked octamers can assemble to form a hexadecamer.

It is found in the secreted. Its subcellular location is the cell membrane. Its function is as follows. Binds negatively charged membrane lipids, such as phosphatidylserine and phosphoinositides. May play a role in cell-cell adhesion processes in the retina, via homomeric interaction between octamers present on the surface of two neighboring cells. Required for normal structure and function of the retina. This chain is Retinoschisin (xlrs1), found in Takifugu rubripes (Japanese pufferfish).